The chain runs to 301 residues: Retinochrome (301 aa).

Residues 1–17 are Extracellular-facing; the sequence is MFGNPAMTGLHQFTMWE. A helical membrane pass occupies residues 18-43; it reads HYFTGSIYLVLGCVVFSLCGMCIIFL. At 44–54 the chain is on the cytoplasmic side; the sequence is ARQSPKPRRKY. A helical transmembrane segment spans residues 55 to 76; that stretch reads AILIHVLITAMAVNGGDPAHAS. Topologically, residues 77–94 are extracellular; that stretch reads SSIVGRWLYGSVGCQLMG. Residues 95–120 form a helical membrane-spanning segment; the sequence is FWGFFGGMSHIWMLFAFAMERYMAVC. At 121-132 the chain is on the cytoplasmic side; it reads HREFYQQMPSVY. A helical transmembrane segment spans residues 133–153; it reads YSIIVGLMYTFGTFWATMPLL. Residues 154–180 lie on the Extracellular side of the membrane; sequence GWASYGLEVHGTSCTINYSVSDESYQS. An N-linked (GlcNAc...) asparagine glycan is attached at Asn-170. A helical transmembrane segment spans residues 181–208; that stretch reads YVFFLAIFSFIFPMVSGWYAISKAWSGL. Topologically, residues 209 to 230 are cytoplasmic; the sequence is SAIPDAEKEKDKDILSEEQLTA. Residues 231–255 form a helical membrane-spanning segment; sequence LAGAFILISLISWSGFGYVAIYSAL. The Extracellular segment spans residues 256 to 264; it reads THGGAQLSH. Residues 265 to 289 traverse the membrane as a helical segment; sequence LRGHVPPIMSKTGCALFPLLIFLLT. Lys-275 carries the N6-(retinylidene)lysine modification. Residues 290-301 are Cytoplasmic-facing; it reads ARSLPKSDTKKP.

The protein belongs to the G-protein coupled receptor 1 family. Opsin subfamily. Mainly stored in myeloid bodies of the inner segments.

The protein localises to the membrane. Its function is as follows. Retinochrome is capable of acting as an effective catalyst in the light to convert various isomers of retinal into 11-cis, the form that is required by opsin to resynthesize rhodopsin. This is Retinochrome from Todarodes pacificus (Japanese flying squid).